A 136-amino-acid chain; its full sequence is Large ribosomal subunit protein uL16 (136 aa).

This sequence belongs to the universal ribosomal protein uL16 family. In terms of assembly, part of the 50S ribosomal subunit.

Binds 23S rRNA and is also seen to make contacts with the A and possibly P site tRNAs. This Shewanella piezotolerans (strain WP3 / JCM 13877) protein is Large ribosomal subunit protein uL16.